The primary structure comprises 544 residues: Chaperonin GroEL 4 (544 aa).

ATP contacts are provided by residues 30–33 (TLGP), K51, 87–91 (DGTTT), G415, and D496.

This sequence belongs to the chaperonin (HSP60) family. Forms a cylinder of 14 subunits composed of two heptameric rings stacked back-to-back. Interacts with the co-chaperonin GroES.

The protein localises to the cytoplasm. It catalyses the reaction ATP + H2O + a folded polypeptide = ADP + phosphate + an unfolded polypeptide.. Its function is as follows. Together with its co-chaperonin GroES, plays an essential role in assisting protein folding. The GroEL-GroES system forms a nano-cage that allows encapsulation of the non-native substrate proteins and provides a physical environment optimized to promote and accelerate protein folding. The chain is Chaperonin GroEL 4 from Sinorhizobium medicae (strain WSM419) (Ensifer medicae).